Reading from the N-terminus, the 380-residue chain is 4-hydroxy-3-methylbut-2-en-1-yl diphosphate synthase (flavodoxin) (380 aa).

Cys275, Cys278, Cys310, and Glu317 together coordinate [4Fe-4S] cluster.

Belongs to the IspG family. [4Fe-4S] cluster serves as cofactor.

The catalysed reaction is (2E)-4-hydroxy-3-methylbut-2-enyl diphosphate + oxidized [flavodoxin] + H2O + 2 H(+) = 2-C-methyl-D-erythritol 2,4-cyclic diphosphate + reduced [flavodoxin]. The protein operates within isoprenoid biosynthesis; isopentenyl diphosphate biosynthesis via DXP pathway; isopentenyl diphosphate from 1-deoxy-D-xylulose 5-phosphate: step 5/6. Functionally, converts 2C-methyl-D-erythritol 2,4-cyclodiphosphate (ME-2,4cPP) into 1-hydroxy-2-methyl-2-(E)-butenyl 4-diphosphate. In Hyphomonas neptunium (strain ATCC 15444), this protein is 4-hydroxy-3-methylbut-2-en-1-yl diphosphate synthase (flavodoxin).